We begin with the raw amino-acid sequence, 156 residues long: Small ribosomal subunit protein uS7 (156 aa).

It belongs to the universal ribosomal protein uS7 family. As to quaternary structure, part of the 30S ribosomal subunit. Contacts proteins S9 and S11.

One of the primary rRNA binding proteins, it binds directly to 16S rRNA where it nucleates assembly of the head domain of the 30S subunit. Is located at the subunit interface close to the decoding center, probably blocks exit of the E-site tRNA. The sequence is that of Small ribosomal subunit protein uS7 from Streptococcus thermophilus (strain CNRZ 1066).